The chain runs to 155 residues: Transcriptional regulator MraZ (155 aa).

2 consecutive SpoVT-AbrB domains span residues 15–62 and 93–136; these read TYEN…GMDR and SEEL…NPTA.

It belongs to the MraZ family. In terms of assembly, forms oligomers.

The protein resides in the cytoplasm. Its subcellular location is the nucleoid. This chain is Transcriptional regulator MraZ, found in Rhodospirillum rubrum (strain ATCC 11170 / ATH 1.1.1 / DSM 467 / LMG 4362 / NCIMB 8255 / S1).